The sequence spans 481 residues: Pyruvate kinase (481 aa).

Residue Arg-33 coordinates substrate. Asn-35, Ser-37, Asp-67, and Thr-68 together coordinate K(+). Asn-35–His-38 is a binding site for ATP. Residues Arg-74 and Lys-155 each coordinate ATP. Glu-221 serves as a coordination point for Mg(2+). Substrate-binding residues include Gly-244, Asp-245, and Thr-277. Asp-245 contributes to the Mg(2+) binding site.

Belongs to the pyruvate kinase family. As to quaternary structure, homotetramer. Mg(2+) is required as a cofactor. The cofactor is K(+).

It carries out the reaction pyruvate + ATP = phosphoenolpyruvate + ADP + H(+). It participates in carbohydrate degradation; glycolysis; pyruvate from D-glyceraldehyde 3-phosphate: step 5/5. This Chlamydia muridarum (strain MoPn / Nigg) protein is Pyruvate kinase (pyk).